The sequence spans 132 residues: D-ribose pyranase (132 aa).

The active-site Proton donor is histidine 20. Substrate-binding positions include aspartate 28, histidine 99, and 121–123 (YSN).

It belongs to the RbsD / FucU family. RbsD subfamily. Homodecamer.

It localises to the cytoplasm. It carries out the reaction beta-D-ribopyranose = beta-D-ribofuranose. It participates in carbohydrate metabolism; D-ribose degradation; D-ribose 5-phosphate from beta-D-ribopyranose: step 1/2. In terms of biological role, catalyzes the interconversion of beta-pyran and beta-furan forms of D-ribose. This is D-ribose pyranase from Pseudomonas putida (strain GB-1).